A 155-amino-acid chain; its full sequence is Ribosomal RNA large subunit methyltransferase H (155 aa).

S-adenosyl-L-methionine contacts are provided by residues Leu-73, Gly-104, and 123–128 (LSALTL).

The protein belongs to the RNA methyltransferase RlmH family. In terms of assembly, homodimer.

The protein resides in the cytoplasm. The enzyme catalyses pseudouridine(1915) in 23S rRNA + S-adenosyl-L-methionine = N(3)-methylpseudouridine(1915) in 23S rRNA + S-adenosyl-L-homocysteine + H(+). In terms of biological role, specifically methylates the pseudouridine at position 1915 (m3Psi1915) in 23S rRNA. This chain is Ribosomal RNA large subunit methyltransferase H, found in Coxiella burnetii (strain Dugway 5J108-111).